A 347-amino-acid polypeptide reads, in one-letter code: UDP-3-O-acylglucosamine N-acyltransferase (347 aa).

Catalysis depends on His-241, which acts as the Proton acceptor.

It belongs to the transferase hexapeptide repeat family. LpxD subfamily. Homotrimer.

It carries out the reaction a UDP-3-O-[(3R)-3-hydroxyacyl]-alpha-D-glucosamine + a (3R)-hydroxyacyl-[ACP] = a UDP-2-N,3-O-bis[(3R)-3-hydroxyacyl]-alpha-D-glucosamine + holo-[ACP] + H(+). Its pathway is bacterial outer membrane biogenesis; LPS lipid A biosynthesis. In terms of biological role, catalyzes the N-acylation of UDP-3-O-acylglucosamine using 3-hydroxyacyl-ACP as the acyl donor. Is involved in the biosynthesis of lipid A, a phosphorylated glycolipid that anchors the lipopolysaccharide to the outer membrane of the cell. The protein is UDP-3-O-acylglucosamine N-acyltransferase of Neisseria meningitidis serogroup A / serotype 4A (strain DSM 15465 / Z2491).